Reading from the N-terminus, the 324-residue chain is ATP synthase subunit a 2 (324 aa).

The N-terminal stretch at 1 to 33 (MKRVNVFRSGVFSRLFALLLPFLLGINGLVYAS) is a signal peptide. A run of 6 helical transmembrane segments spans residues 95–115 (HVVM…LVGN), 157–177 (LPYL…GLVP), 179–199 (GATA…TFFI), 224–244 (ALWI…PFAL), 257–277 (IVIL…VAMF), and 291–311 (IFVA…FIGL).

This sequence belongs to the ATPase A chain family. In terms of assembly, F-type ATPases have 2 components, CF(1) - the catalytic core - and CF(0) - the membrane proton channel. CF(1) has five subunits: alpha(3), beta(3), gamma(1), delta(1), epsilon(1). CF(0) has four main subunits: a, b, b' and c.

The protein localises to the cell inner membrane. Functionally, key component of the proton channel; it plays a direct role in the translocation of protons across the membrane. The polypeptide is ATP synthase subunit a 2 (Prosthecochloris aestuarii (strain DSM 271 / SK 413)).